Reading from the N-terminus, the 296-residue chain is Indole-3-glycerol phosphate synthase (296 aa).

It belongs to the TrpC family.

The catalysed reaction is 1-(2-carboxyphenylamino)-1-deoxy-D-ribulose 5-phosphate + H(+) = (1S,2R)-1-C-(indol-3-yl)glycerol 3-phosphate + CO2 + H2O. It participates in amino-acid biosynthesis; L-tryptophan biosynthesis; L-tryptophan from chorismate: step 4/5. In Microcystis aeruginosa (strain NIES-843 / IAM M-2473), this protein is Indole-3-glycerol phosphate synthase.